The sequence spans 152 residues: Aminoglycoside N(6')-acetyltransferase type 1 (152 aa).

In terms of domain architecture, N-acetyltransferase spans 5-152 (PLVRPVETTD…AQVRCFRKPL (148 aa)). Residues Trp-26, Tyr-73, Glu-86, and Asp-122 each coordinate substrate. Asn-127 lines the acetyl-CoA pocket.

As to quaternary structure, homodimer.

The catalysed reaction is kanamycin B + acetyl-CoA = N(6')-acetylkanamycin B + CoA + H(+). In terms of biological role, catalyzes the transfer of an acetyl group from acetyl-CoA to the 6'-amino group of aminoglycoside molecules conferring resistance to antibiotics containing the purpurosamine ring including amikacin. This Klebsiella aerogenes (Enterobacter aerogenes) protein is Aminoglycoside N(6')-acetyltransferase type 1 (aacA7).